The sequence spans 380 residues: Glutamate 5-kinase (380 aa).

Lysine 20 serves as a coordination point for ATP. Substrate contacts are provided by serine 59, aspartate 146, and asparagine 158. 220–226 provides a ligand contact to ATP; the sequence is TGGMYSK. Residues 285 to 363 form the PUA domain; the sequence is SGTVTVDEGA…HEVAAILGDA (79 aa).

This sequence belongs to the glutamate 5-kinase family.

It is found in the cytoplasm. The catalysed reaction is L-glutamate + ATP = L-glutamyl 5-phosphate + ADP. Its pathway is amino-acid biosynthesis; L-proline biosynthesis; L-glutamate 5-semialdehyde from L-glutamate: step 1/2. Functionally, catalyzes the transfer of a phosphate group to glutamate to form L-glutamate 5-phosphate. This is Glutamate 5-kinase from Nitratidesulfovibrio vulgaris (strain ATCC 29579 / DSM 644 / CCUG 34227 / NCIMB 8303 / VKM B-1760 / Hildenborough) (Desulfovibrio vulgaris).